The sequence spans 258 residues: Ribosomal RNA large subunit methyltransferase E (258 aa).

Positions 58, 60, 78, 96, and 120 each coordinate S-adenosyl-L-methionine. Lys-160 acts as the Proton acceptor in catalysis.

This sequence belongs to the class I-like SAM-binding methyltransferase superfamily. RNA methyltransferase RlmE family.

Its subcellular location is the cytoplasm. The catalysed reaction is uridine(2552) in 23S rRNA + S-adenosyl-L-methionine = 2'-O-methyluridine(2552) in 23S rRNA + S-adenosyl-L-homocysteine + H(+). In terms of biological role, specifically methylates the uridine in position 2552 of 23S rRNA at the 2'-O position of the ribose in the fully assembled 50S ribosomal subunit. This chain is Ribosomal RNA large subunit methyltransferase E, found in Methanococcus maripaludis (strain C7 / ATCC BAA-1331).